The chain runs to 553 residues: Hydroxylamine reductase (553 aa).

[2Fe-2S] cluster contacts are provided by cysteine 3, cysteine 6, cysteine 18, and cysteine 25. Positions 252, 276, 320, 408, 436, 461, 495, and 497 each coordinate hybrid [4Fe-2O-2S] cluster. Cysteine persulfide is present on cysteine 408.

Belongs to the HCP family. Requires [2Fe-2S] cluster as cofactor. Hybrid [4Fe-2O-2S] cluster serves as cofactor.

The protein resides in the cytoplasm. It carries out the reaction A + NH4(+) + H2O = hydroxylamine + AH2 + H(+). In terms of biological role, catalyzes the reduction of hydroxylamine to form NH(3) and H(2)O. The chain is Hydroxylamine reductase from Vibrio vulnificus (strain YJ016).